We begin with the raw amino-acid sequence, 192 residues long: Molybdenum cofactor guanylyltransferase (192 aa).

Lys-21, Asp-67, and Asp-101 together coordinate GTP. Asp-101 is a Mg(2+) binding site.

The protein belongs to the MobA family. In terms of assembly, monomer. The cofactor is Mg(2+).

It localises to the cytoplasm. It carries out the reaction Mo-molybdopterin + GTP + H(+) = Mo-molybdopterin guanine dinucleotide + diphosphate. Its function is as follows. Transfers a GMP moiety from GTP to Mo-molybdopterin (Mo-MPT) cofactor (Moco or molybdenum cofactor) to form Mo-molybdopterin guanine dinucleotide (Mo-MGD) cofactor. The sequence is that of Molybdenum cofactor guanylyltransferase from Neisseria meningitidis serogroup C / serotype 2a (strain ATCC 700532 / DSM 15464 / FAM18).